A 283-amino-acid chain; its full sequence is Pyridoxine/pyridoxal/pyridoxamine kinase (283 aa).

Positions 23 and 59 each coordinate substrate. Residue aspartate 125 coordinates ATP. Residue tyrosine 136 coordinates Mg(2+). Residues threonine 157, glutamate 162, threonine 195, 222 to 225 (HAHV), and threonine 232 contribute to the ATP site. Glutamate 162 is a binding site for Mg(2+). Aspartate 234 contacts substrate.

The protein belongs to the pyridoxine kinase family. PdxK subfamily. As to quaternary structure, homodimer. Mg(2+) serves as cofactor.

The catalysed reaction is pyridoxal + ATP = pyridoxal 5'-phosphate + ADP + H(+). The enzyme catalyses pyridoxine + ATP = pyridoxine 5'-phosphate + ADP + H(+). It catalyses the reaction pyridoxamine + ATP = pyridoxamine 5'-phosphate + ADP + H(+). It functions in the pathway cofactor metabolism; pyridoxal 5'-phosphate salvage; pyridoxal 5'-phosphate from pyridoxal: step 1/1. It participates in cofactor metabolism; pyridoxal 5'-phosphate salvage; pyridoxine 5'-phosphate from pyridoxine: step 1/1. The protein operates within cofactor metabolism; pyridoxal 5'-phosphate salvage; pyridoxamine 5'-phosphate from pyridoxamine: step 1/1. Its function is as follows. B6-vitamer kinase involved in the salvage pathway of pyridoxal 5'-phosphate (PLP). Catalyzes the phosphorylation of pyridoxine (PN), pyridoxal (PL), and pyridoxamine (PM), forming their respective 5'-phosphorylated esters, i.e. PNP, PLP and PMP. This is Pyridoxine/pyridoxal/pyridoxamine kinase from Bordetella pertussis (strain Tohama I / ATCC BAA-589 / NCTC 13251).